The following is a 510-amino-acid chain: MSAKKPLALVILDGYGYREDTASNAIANAKTPVMDALIANNPNTLISASGMDVGLPDGQMGNSEVGHTNIGAGRVVYQDLTRITKSIADGEFAETAALVEAIDSAVKAEKAVHIMGLMSPGGVHSHEDHIYAAVEMAAARGAEKIYLHCFLDGRDTPPRSAENSLQRFQDLFAKLGKGRVASLVGRYYAMDRDNNWDRVQVAYDLLTQAKAEFTAETAVAGLEAAYAREENDEFVKATAIKAEGQEDAIMQDGDAVIFMNYRADRARQITRAFVPAFDGFERAVFPAINFVMLTQYAADIPLAIAFPPASLENTYGEWLSKQGQTQLRISETEKYAHVTFFFNGGIENEFEGEERQLVASPKVATYDMQPEMSSPELTEKMVAAIKSGKYDTIICNYPNADMVGHTGVYEAAEQAIEALDESVGKVVEAIKEVSGQMLITADHGNAEMMIDPETGGVHTAHTNLPVPLIYVGDKAVEFKEGGKLSDLAPTMLSLAGLEIPAEMSGEVLVK.

Positions 13 and 63 each coordinate Mn(2+). Catalysis depends on Ser-63, which acts as the Phosphoserine intermediate. Substrate contacts are provided by residues His-124, 154-155 (RD), Arg-186, Arg-192, 262-265 (RADR), and Lys-334. The Mn(2+) site is built by Asp-401, His-405, Asp-442, His-443, and His-461.

It belongs to the BPG-independent phosphoglycerate mutase family. In terms of assembly, monomer. It depends on Mn(2+) as a cofactor.

The catalysed reaction is (2R)-2-phosphoglycerate = (2R)-3-phosphoglycerate. The protein operates within carbohydrate degradation; glycolysis; pyruvate from D-glyceraldehyde 3-phosphate: step 3/5. Functionally, catalyzes the interconversion of 2-phosphoglycerate and 3-phosphoglycerate. The protein is 2,3-bisphosphoglycerate-independent phosphoglycerate mutase of Vibrio campbellii (strain ATCC BAA-1116).